A 200-amino-acid chain; its full sequence is Lipopolysaccharide core heptose(II)-phosphate phosphatase (200 aa).

A signal peptide spans 1–25 (MLAFCRSSLKSKKYFIILLALAAIA).

The protein belongs to the phosphoglycerate mutase family. Ais subfamily.

The protein resides in the periplasm. It functions in the pathway bacterial outer membrane biogenesis; lipopolysaccharide metabolism. Catalyzes the dephosphorylation of heptose(II) of the outer membrane lipopolysaccharide core. In Escherichia coli O7:K1 (strain IAI39 / ExPEC), this protein is Lipopolysaccharide core heptose(II)-phosphate phosphatase.